Here is a 325-residue protein sequence, read N- to C-terminus: Ribonucleoside-diphosphate reductase subunit beta (325 aa).

Residues Asp-73, Glu-104, and His-107 each coordinate Fe cation. The active site involves Tyr-111. Residues Glu-164, Glu-198, and His-201 each contribute to the Fe cation site.

This sequence belongs to the ribonucleoside diphosphate reductase small chain family. In terms of assembly, tetramer of two alpha and two beta subunits. It depends on Fe cation as a cofactor.

The catalysed reaction is a 2'-deoxyribonucleoside 5'-diphosphate + [thioredoxin]-disulfide + H2O = a ribonucleoside 5'-diphosphate + [thioredoxin]-dithiol. Functionally, provides the precursors necessary for DNA synthesis. Catalyzes the biosynthesis of deoxyribonucleotides from the corresponding ribonucleotides. This Mycobacterium leprae (strain TN) protein is Ribonucleoside-diphosphate reductase subunit beta (nrdF).